Here is a 72-residue protein sequence, read N- to C-terminus: SRY-related protein AES1 (72 aa).

The segment at residues 1–69 (VKRPMNAFMV…KHMADYPDYK (69 aa)) is a DNA-binding region (HMG box).

It is found in the nucleus. This is SRY-related protein AES1 from Alligator mississippiensis (American alligator).